Here is a 211-residue protein sequence, read N- to C-terminus: Dual specificity protein phosphatase 26 (211 aa).

Residues 60-207 (NHADEVWPGL…LLALDRRLRQ (148 aa)) enclose the Tyrosine-protein phosphatase domain. The active-site Phosphocysteine intermediate is the Cys152.

The protein belongs to the protein-tyrosine phosphatase family. Non-receptor class dual specificity subfamily. In terms of assembly, interacts with HSF4.

The protein resides in the cytoplasm. Its subcellular location is the nucleus. The protein localises to the golgi apparatus. The catalysed reaction is O-phospho-L-tyrosyl-[protein] + H2O = L-tyrosyl-[protein] + phosphate. It carries out the reaction O-phospho-L-seryl-[protein] + H2O = L-seryl-[protein] + phosphate. The enzyme catalyses O-phospho-L-threonyl-[protein] + H2O = L-threonyl-[protein] + phosphate. Inactivates MAPK1 and MAPK3 which leads to dephosphorylation of heat shock factor protein 4 and a reduction in its DNA-binding activity. The protein is Dual specificity protein phosphatase 26 (DUSP26) of Pongo abelii (Sumatran orangutan).